Here is a 427-residue protein sequence, read N- to C-terminus: Glutamate-1-semialdehyde 2,1-aminomutase (427 aa).

Lysine 265 is subject to N6-(pyridoxal phosphate)lysine.

The protein belongs to the class-III pyridoxal-phosphate-dependent aminotransferase family. HemL subfamily. In terms of assembly, homodimer. Pyridoxal 5'-phosphate is required as a cofactor.

The protein localises to the cytoplasm. It catalyses the reaction (S)-4-amino-5-oxopentanoate = 5-aminolevulinate. Its pathway is porphyrin-containing compound metabolism; protoporphyrin-IX biosynthesis; 5-aminolevulinate from L-glutamyl-tRNA(Glu): step 2/2. The polypeptide is Glutamate-1-semialdehyde 2,1-aminomutase (Shewanella amazonensis (strain ATCC BAA-1098 / SB2B)).